Here is a 211-residue protein sequence, read N- to C-terminus: Superoxide dismutase [Fe] (211 aa).

Positions 31, 79, 165, and 169 each coordinate Fe cation.

Belongs to the iron/manganese superoxide dismutase family. As to quaternary structure, homotetramer. The cofactor is Fe cation.

The catalysed reaction is 2 superoxide + 2 H(+) = H2O2 + O2. Its function is as follows. Destroys superoxide anion radicals which are normally produced within the cells and which are toxic to biological systems. This chain is Superoxide dismutase [Fe] (sod), found in Pyrobaculum aerophilum (strain ATCC 51768 / DSM 7523 / JCM 9630 / CIP 104966 / NBRC 100827 / IM2).